The chain runs to 137 residues: Small ribosomal subunit protein bS16 (137 aa).

Composition is skewed to basic and acidic residues over residues Lys-80 to Gln-99 and Val-111 to Pro-125. A disordered region spans residues Lys-80 to Glu-137. Residues Pro-126–Glu-137 show a composition bias toward low complexity.

The protein belongs to the bacterial ribosomal protein bS16 family.

This Coxiella burnetii (strain Dugway 5J108-111) protein is Small ribosomal subunit protein bS16.